A 166-amino-acid chain; its full sequence is Disulfide bond formation protein B (166 aa).

The Cytoplasmic segment spans residues 1-11 (MQSFAFSTRAL). A helical membrane pass occupies residues 12–28 (FLGLFAVCAGLLGFGLY). Over 29-46 (LQHAVGLEPCPMCIMQRY) the chain is Periplasmic. A disulfide bridge connects residues Cys-38 and Cys-41. The chain crosses the membrane as a helical span at residues 47 to 63 (AFVAIALTALVAGLHGP). Residues 64–70 (GRRGTRA) are Cytoplasmic-facing. The helical transmembrane segment at 71–87 (YAAVILLLALAGGGVAL) threads the bilayer. At 88 to 143 (RQTWMQLYPPEFAECGPDLEFMLGSFPLADALPMIFQGAGDCSKVDWAFLGLSIAN) the chain is on the periplasmic side. Cys-102 and Cys-129 form a disulfide bridge. A helical transmembrane segment spans residues 144–162 (WSLVCLTLVAVFAIMMIAR). The Cytoplasmic portion of the chain corresponds to 163-166 (KRGG).

The protein belongs to the DsbB family.

The protein localises to the cell inner membrane. Required for disulfide bond formation in some periplasmic proteins. Acts by oxidizing the DsbA protein. This Aromatoleum aromaticum (strain DSM 19018 / LMG 30748 / EbN1) (Azoarcus sp. (strain EbN1)) protein is Disulfide bond formation protein B.